We begin with the raw amino-acid sequence, 681 residues long: Chaperone protein htpG (681 aa).

An a; substrate-binding region spans residues 1–326 (MQKGNIGVTT…SPDIPLNVSR (326 aa)). The interval 327–545 (SYLQSDSNVK…YMRRMKEMAN (219 aa)) is b. The segment at 546–681 (IQAGMSFYGE…NFVKRSIELI (136 aa)) is c.

It belongs to the heat shock protein 90 family. In terms of assembly, homodimer.

Its subcellular location is the cytoplasm. Molecular chaperone. Has ATPase activity. This is Chaperone protein htpG from Bacteroides fragilis (strain YCH46).